A 1274-amino-acid chain; its full sequence is Virulence protein SSD1 (1274 aa).

The segment covering 1-13 (MSSSQDYNNNSNN) has biased composition (low complexity). Disordered stretches follow at residues 1–38 (MSSS…SELT), 61–124 (LEEK…GHSR), 138–337 (ANQK…TLFA), and 413–488 (KEKE…DDVE). The span at 19–32 (SSRKGKNLHVAHRR) shows a compositional bias: basic residues. Residues 72–81 (FTYPSAQGSS) show a composition bias toward polar residues. Residues 95–106 (NRSSHSRSSSIN) show a composition bias toward low complexity. The segment covering 139–152 (NQKQSNRNSLSPTI) has biased composition (polar residues). The span at 177-187 (GDTSGQSSSSH) shows a compositional bias: low complexity. A compositionally biased stretch (polar residues) spans 248–263 (SGSNTNTDGINSNWRA). A compositionally biased stretch (low complexity) spans 264–282 (QQQSPQQQQRQGGLLEPPQ). A compositionally biased stretch (gly residues) spans 320–330 (QQGGHQGGGNN). Residues 413-437 (KEKEEKKRRKDNTLHSRPLTDDIHN) show a composition bias toward basic and acidic residues. Positions 438–453 (DATSAPNTAEGSVTGT) are enriched in polar residues. A CSD2 domain is found at 562 to 637 (VWFKPTDKKV…EIDSILRDNN (76 aa)). The 314-residue stretch at 688 to 1001 (FVDHALHVKR…VHRQLKAVLN (314 aa)) folds into the RNB domain. In terms of domain architecture, DIS3L2 C-terminal spans 1050-1136 (GQLLCMGTVV…KNKYRTSALQ (87 aa)). The segment at 1174–1217 (SLKSNELHEVEKDETKSMPSSPTQSEIPKNVRTNSSSRISSSGN) is disordered. Residues 1178–1189 (NELHEVEKDETK) are compositionally biased toward basic and acidic residues. Polar residues predominate over residues 1190 to 1207 (SMPSSPTQSEIPKNVRTN).

Belongs to the RNR ribonuclease family.

Functionally, plays a role in resistance to host antimicrobial peptides such as protamine, RP-1, or human beta-defensin-2; allowing colonization of human tissues. Required for resistance to membrane permeabilization and maintenance of mitochondrial membrane potential upon exposure to RP-1. The protein is Virulence protein SSD1 (SSD1) of Candida albicans (strain SC5314 / ATCC MYA-2876) (Yeast).